Here is a 241-residue protein sequence, read N- to C-terminus: Ribonuclease HII (241 aa).

One can recognise an RNase H type-2 domain in the interval 57 to 241 (NFIAGVDEAG…RTYVEKILKG (185 aa)). A divalent metal cation contacts are provided by aspartate 63, glutamate 64, and aspartate 155.

This sequence belongs to the RNase HII family. It depends on Mn(2+) as a cofactor. The cofactor is Mg(2+).

It is found in the cytoplasm. It catalyses the reaction Endonucleolytic cleavage to 5'-phosphomonoester.. In terms of biological role, endonuclease that specifically degrades the RNA of RNA-DNA hybrids. This is Ribonuclease HII from Caldanaerobacter subterraneus subsp. tengcongensis (strain DSM 15242 / JCM 11007 / NBRC 100824 / MB4) (Thermoanaerobacter tengcongensis).